The following is a 111-amino-acid chain: Nucleoid-associated protein VF_1686 (111 aa).

Disordered stretches follow at residues 1 to 23 (MFGG…DRMQ) and 89 to 111 (TQKE…KMPF).

It belongs to the YbaB/EbfC family. As to quaternary structure, homodimer.

Its subcellular location is the cytoplasm. It localises to the nucleoid. In terms of biological role, binds to DNA and alters its conformation. May be involved in regulation of gene expression, nucleoid organization and DNA protection. This chain is Nucleoid-associated protein VF_1686, found in Aliivibrio fischeri (strain ATCC 700601 / ES114) (Vibrio fischeri).